The sequence spans 205 residues: Beta-crystallin B2 (205 aa).

Ala2 carries the post-translational modification N-acetylalanine. The interval 2-16 (ASDHQSPATKQQQPS) is N-terminal arm. Beta/gamma crystallin 'Greek key' domains are found at residues 17-56 (SKIV…LVHS) and 57-101 (GPWV…RPIK). Residues 102–106 (VDSQE) are connecting peptide. Beta/gamma crystallin 'Greek key' domains are found at residues 107 to 148 (HKIV…RVQS) and 149 to 191 (GTWV…RRIR). The interval 193 to 205 (MQWHQRGTFHPTN) is C-terminal arm.

Belongs to the beta/gamma-crystallin family. As to quaternary structure, homo/heterodimer, or complexes of higher-order. The structure of beta-crystallin oligomers seems to be stabilized through interactions between the N-terminal arms. The N-terminus is blocked.

In terms of biological role, crystallins are the dominant structural components of the vertebrate eye lens. The chain is Beta-crystallin B2 from Aquarana catesbeiana (American bullfrog).